The sequence spans 392 residues: Monooxygenase AgnR1 (392 aa).

The first 20 residues, 1-20 (MSAPQKCAAVVVGAGPAGLA), serve as a signal peptide directing secretion. Residue Asn134 is glycosylated (N-linked (GlcNAc...) asparagine).

Its function is as follows. Monooxygenase; part of the gene cluster that mediates the biosynthesis of agnestins, dihydroxy-xanthone metabolites. The pathway begins with the assembly and cyclization of atrochrysone thioester by the non-reducing polyketide synthase Agnpks1. The atrochrysone carboxyl ACP thioesterase AgnL7 then breaks the thioester bond and releases the atrochrysone carboxylic acid as the first enzyme-free intermediate. The decarboxylase AgnL1 then catalyzes the concerted decarboxylation-elimination required to convert atochrysone carboxylic acid into emodin anthrone, which is further oxidized to emodin by the anthrone oxygenase AgnL2. Emodin then undergoes reduction catalyzed by the oxidoreductase AgnL4 to yield the dihydroquinone tautomer which is the substrate for reduction by the short chain dehydrogenase AgnL6 reduction to produce hydroxyketone, followed by AgnL8 dehydration and likely spontaneous autoxidation to chrysophanol. Baeyer-Villiger oxidation by the oxidase AgnL3 leads to monodictyphenone via cleavage of the C-10/C-10a bond of chrysophanol. Alternative cleavage at the C-4a/C-10 bond of chrysophanol also leads to the formation some cephalone F. Further conversion to agnestins A and B, requires reduction to dihydro-monodictyphenone, oxidation to agnestin C probably via an epoxide, and rearrangement to either agnestin A or agnestin B directly, although agnestin A or agnestin B can also interconvert. Within the cluster, AgnR1 is the only unassigned oxidoreductase present which could be involved in this conversion. However, AgnR1 seems not to be involved in this step, and thus genes involved in the proposed oxidation/reduction may be located elsewhere on the genome. Further agnestin A derivatives are probably formed by spontaneous decarboxylations, dehydrations and methanolysis reactions. The polypeptide is Monooxygenase AgnR1 (Paecilomyces divaricatus (Penicillium divaricatum)).